We begin with the raw amino-acid sequence, 162 residues long: Nucleotide-binding protein Mpe_A3039 (162 aa).

Belongs to the YajQ family.

In terms of biological role, nucleotide-binding protein. In Methylibium petroleiphilum (strain ATCC BAA-1232 / LMG 22953 / PM1), this protein is Nucleotide-binding protein Mpe_A3039.